Here is a 349-residue protein sequence, read N- to C-terminus: Small ribosomal subunit biogenesis GTPase RsgA (349 aa).

Positions 1–38 (MSKNKLSKGQERRVQANHQRRLKRTDNKPELDDSQLGE) are disordered. One can recognise a CP-type G domain in the interval 102–272 (TSVLNRPDIY…VIDSPGVREF (171 aa)). GTP contacts are provided by residues 158 to 161 (NKID) and 212 to 220 (GQSGVGKSS). Residues C296, C301, H303, and C309 each contribute to the Zn(2+) site.

Belongs to the TRAFAC class YlqF/YawG GTPase family. RsgA subfamily. Monomer. Associates with 30S ribosomal subunit, binds 16S rRNA. Requires Zn(2+) as cofactor.

It localises to the cytoplasm. Functionally, one of several proteins that assist in the late maturation steps of the functional core of the 30S ribosomal subunit. Helps release RbfA from mature subunits. May play a role in the assembly of ribosomal proteins into the subunit. Circularly permuted GTPase that catalyzes slow GTP hydrolysis, GTPase activity is stimulated by the 30S ribosomal subunit. The sequence is that of Small ribosomal subunit biogenesis GTPase RsgA from Serratia proteamaculans (strain 568).